The primary structure comprises 248 residues: Ubiquinone/menaquinone biosynthesis C-methyltransferase UbiE (248 aa).

2 residues coordinate S-adenosyl-L-methionine: Ser-68 and Asp-92.

Belongs to the class I-like SAM-binding methyltransferase superfamily. MenG/UbiE family.

The catalysed reaction is a 2-demethylmenaquinol + S-adenosyl-L-methionine = a menaquinol + S-adenosyl-L-homocysteine + H(+). It catalyses the reaction a 2-methoxy-6-(all-trans-polyprenyl)benzene-1,4-diol + S-adenosyl-L-methionine = a 5-methoxy-2-methyl-3-(all-trans-polyprenyl)benzene-1,4-diol + S-adenosyl-L-homocysteine + H(+). It functions in the pathway quinol/quinone metabolism; menaquinone biosynthesis; menaquinol from 1,4-dihydroxy-2-naphthoate: step 2/2. The protein operates within cofactor biosynthesis; ubiquinone biosynthesis. Methyltransferase required for the conversion of demethylmenaquinol (DMKH2) to menaquinol (MKH2) and the conversion of 2-polyprenyl-6-methoxy-1,4-benzoquinol (DDMQH2) to 2-polyprenyl-3-methyl-6-methoxy-1,4-benzoquinol (DMQH2). The polypeptide is Ubiquinone/menaquinone biosynthesis C-methyltransferase UbiE (Rickettsia felis (strain ATCC VR-1525 / URRWXCal2) (Rickettsia azadi)).